Reading from the N-terminus, the 263-residue chain is Phosphatidylglycerol--prolipoprotein diacylglyceryl transferase (263 aa).

The next 4 membrane-spanning stretches (helical) occupy residues 6-26, 50-70, 85-105, and 112-132; these read VIFS…VLGI, LLTA…VLIY, TWEG…AVII, and IPTF…LFLG. Arg133 lines the a 1,2-diacyl-sn-glycero-3-phospho-(1'-sn-glycerol) pocket. The next 3 membrane-spanning stretches (helical) occupy residues 169 to 189, 197 to 217, and 233 to 253; these read LYEA…LFFL, GALT…VEFF, and MGQL…LGAL.

This sequence belongs to the Lgt family.

It is found in the cell membrane. The enzyme catalyses L-cysteinyl-[prolipoprotein] + a 1,2-diacyl-sn-glycero-3-phospho-(1'-sn-glycerol) = an S-1,2-diacyl-sn-glyceryl-L-cysteinyl-[prolipoprotein] + sn-glycerol 1-phosphate + H(+). The protein operates within protein modification; lipoprotein biosynthesis (diacylglyceryl transfer). In terms of biological role, catalyzes the transfer of the diacylglyceryl group from phosphatidylglycerol to the sulfhydryl group of the N-terminal cysteine of a prolipoprotein, the first step in the formation of mature lipoproteins. This is Phosphatidylglycerol--prolipoprotein diacylglyceryl transferase from Wolbachia pipientis wMel.